Consider the following 62-residue polypeptide: Large ribosomal subunit protein bL28 (62 aa).

This sequence belongs to the bacterial ribosomal protein bL28 family.

The chain is Large ribosomal subunit protein bL28 from Caldicellulosiruptor bescii (strain ATCC BAA-1888 / DSM 6725 / KCTC 15123 / Z-1320) (Anaerocellum thermophilum).